Consider the following 224-residue polypeptide: tRNA (guanine-N(7)-)-methyltransferase (224 aa).

S-adenosyl-L-methionine-binding residues include E54, E79, E106, and D129. Residue D129 is part of the active site. Positions 133 and 165 each coordinate substrate.

Belongs to the class I-like SAM-binding methyltransferase superfamily. TrmB family.

It carries out the reaction guanosine(46) in tRNA + S-adenosyl-L-methionine = N(7)-methylguanosine(46) in tRNA + S-adenosyl-L-homocysteine. The protein operates within tRNA modification; N(7)-methylguanine-tRNA biosynthesis. Catalyzes the formation of N(7)-methylguanine at position 46 (m7G46) in tRNA. This chain is tRNA (guanine-N(7)-)-methyltransferase, found in Chlamydia trachomatis serovar D (strain ATCC VR-885 / DSM 19411 / UW-3/Cx).